Here is a 144-residue protein sequence, read N- to C-terminus: Large-conductance mechanosensitive channel (144 aa).

Transmembrane regions (helical) follow at residues 14 to 34 and 81 to 101; these read VLDM…VTSF and GTFL…FLII.

Belongs to the MscL family. As to quaternary structure, homopentamer.

The protein resides in the cell inner membrane. Its function is as follows. Channel that opens in response to stretch forces in the membrane lipid bilayer. May participate in the regulation of osmotic pressure changes within the cell. The polypeptide is Large-conductance mechanosensitive channel (Bdellovibrio bacteriovorus (strain ATCC 15356 / DSM 50701 / NCIMB 9529 / HD100)).